A 463-amino-acid chain; its full sequence is Methionine aminopeptidase 2-1 (463 aa).

Residues 1 to 98 (MGSKTPEEQI…PPRVPLSDLF (98 aa)) are disordered. Over residues 30–45 (RGTHLSRDGDGSLGDH) the composition is skewed to basic and acidic residues. Residues 46-55 (GDDDDADEDD) show a composition bias toward acidic residues. The span at 69 to 81 (KKKKRPKKKKKPA) shows a compositional bias: basic residues. His214 contributes to the substrate binding site. 3 residues coordinate a divalent metal cation: Asp235, Asp246, and His315. His323 is a binding site for substrate. 2 residues coordinate a divalent metal cation: Glu348 and Glu444.

It belongs to the peptidase M24A family. Methionine aminopeptidase eukaryotic type 2 subfamily. It depends on Co(2+) as a cofactor. Zn(2+) serves as cofactor. The cofactor is Mn(2+). Requires Fe(2+) as cofactor.

Its subcellular location is the cytoplasm. It catalyses the reaction Release of N-terminal amino acids, preferentially methionine, from peptides and arylamides.. Cotranslationally removes the N-terminal methionine from nascent proteins. The N-terminal methionine is often cleaved when the second residue in the primary sequence is small and uncharged (Met-Ala-, Cys, Gly, Pro, Ser, Thr, or Val). The sequence is that of Methionine aminopeptidase 2-1 from Colletotrichum graminicola (strain M1.001 / M2 / FGSC 10212) (Maize anthracnose fungus).